A 945-amino-acid polypeptide reads, in one-letter code: Valine--tRNA ligase (945 aa).

Residues 42 to 52 (PNVTGTLHMGH) carry the 'HIGH' region motif. A 'KMSKS' region motif is present at residues 552 to 556 (KMSKS). Lys-555 provides a ligand contact to ATP. Residues 879 to 945 (DKAAETARLS…VQNQLAKLKD (67 aa)) are a coiled coil.

The protein belongs to the class-I aminoacyl-tRNA synthetase family. ValS type 1 subfamily. As to quaternary structure, monomer.

The protein resides in the cytoplasm. The catalysed reaction is tRNA(Val) + L-valine + ATP = L-valyl-tRNA(Val) + AMP + diphosphate. In terms of biological role, catalyzes the attachment of valine to tRNA(Val). As ValRS can inadvertently accommodate and process structurally similar amino acids such as threonine, to avoid such errors, it has a 'posttransfer' editing activity that hydrolyzes mischarged Thr-tRNA(Val) in a tRNA-dependent manner. The sequence is that of Valine--tRNA ligase from Neisseria meningitidis serogroup B (strain ATCC BAA-335 / MC58).